The sequence spans 154 residues: Large ribosomal subunit protein bL19 (154 aa).

Residues Met1 to Pro33 form a disordered region. The span at Glu16–Ala27 shows a compositional bias: low complexity.

It belongs to the bacterial ribosomal protein bL19 family.

Functionally, this protein is located at the 30S-50S ribosomal subunit interface and may play a role in the structure and function of the aminoacyl-tRNA binding site. This Parasynechococcus marenigrum (strain WH8102) protein is Large ribosomal subunit protein bL19.